The sequence spans 763 residues: Serine/threonine-protein kinase PknG (763 aa).

Residues 1–32 (MKREHMDHDTEDVGQAAQRADPPSGTTEGRLQ) are disordered. Residues 160-406 (YEVKGCIAHG…SAEEMSAQLM (247 aa)) form the Protein kinase domain. ATP is bound by residues 166 to 174 (IAHGGLGWV) and Lys190. Asp289 functions as the Proton acceptor in the catalytic mechanism.

Belongs to the protein kinase superfamily. Ser/Thr protein kinase family. In terms of processing, autophosphorylated.

It carries out the reaction L-seryl-[protein] + ATP = O-phospho-L-seryl-[protein] + ADP + H(+). It catalyses the reaction L-threonyl-[protein] + ATP = O-phospho-L-threonyl-[protein] + ADP + H(+). This is Serine/threonine-protein kinase PknG (pknG) from Mycobacterium leprae (strain TN).